Reading from the N-terminus, the 32-residue chain is Photosystem II reaction center protein Z (32 aa).

The chain crosses the membrane as a helical span at residues 12–32 (IGSAAWAGLVLLVGTLNYLVI).

This sequence belongs to the PsbZ family. As to quaternary structure, PSII is composed of 1 copy each of membrane proteins PsbA, PsbB, PsbC, PsbD, PsbE, PsbF, PsbH, PsbI, PsbJ, PsbK, PsbL, PsbM, PsbT, PsbY, PsbZ, Psb30/Ycf12, at least 3 peripheral proteins of the oxygen-evolving complex and a large number of cofactors. It forms dimeric complexes.

The protein resides in the plastid. It localises to the chloroplast thylakoid membrane. Its function is as follows. May control the interaction of photosystem II (PSII) cores with the light-harvesting antenna, regulates electron flow through the 2 photosystem reaction centers. PSII is a light-driven water plastoquinone oxidoreductase, using light energy to abstract electrons from H(2)O, generating a proton gradient subsequently used for ATP formation. This chain is Photosystem II reaction center protein Z, found in Euglena anabaena (Euglenaria anabaena).